Reading from the N-terminus, the 427-residue chain is NADH-quinone oxidoreductase subunit 14 (427 aa).

A run of 14 helical transmembrane segments spans residues 1–21 (MTLA…FVLP), 30–50 (LLGL…PFAF), 57–77 (GVSQ…VGLV), 79–99 (SGRF…HLLA), 104–124 (LLLM…LATW), 137–157 (FLLG…FYGA), 172–192 (YALA…LAPF), 204–224 (PTPV…AALL), 230–250 (PEAL…AALA), 257–277 (LLAY…YTGN), 280–300 (ALGF…AVLS), 322–342 (LGLA…LAGF), 360–380 (VLVL…GLGL), and 400–420 (AAVV…GLVL).

This sequence belongs to the complex I subunit 2 family. As to quaternary structure, NDH-1 is composed of 15 different subunits, Nqo1 to Nqo15. The complex has a L-shaped structure, with the hydrophobic arm (subunits Nqo7, Nqo8 and Nqo10 to Nqo14) embedded in the membrane and the hydrophilic peripheral arm (subunits Nqo1 to Nqo6, Nqo9 and Nqo15) protruding into the bacterial cytoplasm. The hydrophilic domain contains all the redox centers.

It localises to the cell inner membrane. It catalyses the reaction a quinone + NADH + 5 H(+)(in) = a quinol + NAD(+) + 4 H(+)(out). Its function is as follows. NDH-1 shuttles electrons from NADH, via FMN and iron-sulfur (Fe-S) centers, to quinones in the respiratory chain. The immediate electron acceptor for the enzyme in this species is menaquinone. Couples the redox reaction to proton translocation (for every two electrons transferred, four hydrogen ions are translocated across the cytoplasmic membrane), and thus conserves the redox energy in a proton gradient required for the synthesis of ATP. This is NADH-quinone oxidoreductase subunit 14 (nqo14) from Thermus thermophilus (strain ATCC 27634 / DSM 579 / HB8).